A 230-amino-acid chain; its full sequence is NAD(P)H-hydrate epimerase (230 aa).

The YjeF N-terminal domain occupies 11-218 (AIDVDQELFT…ALQRKYELNL (208 aa)). 61–65 (NNGGD) is a binding site for (6S)-NADPHX. K(+) is bound by residues Asn-62 and Asp-126. Residues 130–136 (GFSFKPP) and Asp-159 each bind (6S)-NADPHX. Position 162 (Ser-162) interacts with K(+).

This sequence belongs to the NnrE/AIBP family. K(+) is required as a cofactor.

It catalyses the reaction (6R)-NADHX = (6S)-NADHX. It carries out the reaction (6R)-NADPHX = (6S)-NADPHX. In terms of biological role, catalyzes the epimerization of the S- and R-forms of NAD(P)HX, a damaged form of NAD(P)H that is a result of enzymatic or heat-dependent hydration. This is a prerequisite for the S-specific NAD(P)H-hydrate dehydratase to allow the repair of both epimers of NAD(P)HX. This chain is NAD(P)H-hydrate epimerase, found in Drosophila erecta (Fruit fly).